The following is a 606-amino-acid chain: Adenine deaminase (606 aa).

It belongs to the metallo-dependent hydrolases superfamily. Adenine deaminase family. The cofactor is Mn(2+).

The catalysed reaction is adenine + H2O + H(+) = hypoxanthine + NH4(+). This chain is Adenine deaminase, found in Rubrobacter xylanophilus (strain DSM 9941 / JCM 11954 / NBRC 16129 / PRD-1).